Reading from the N-terminus, the 213-residue chain is Large ribosomal subunit protein uL1 (213 aa).

Belongs to the universal ribosomal protein uL1 family. As to quaternary structure, part of the 50S ribosomal subunit.

Binds directly to 23S rRNA. Probably involved in E site tRNA release. Its function is as follows. Protein L1 is also a translational repressor protein, it controls the translation of its operon by binding to its mRNA. The protein is Large ribosomal subunit protein uL1 of Methanococcus maripaludis (strain C6 / ATCC BAA-1332).